Consider the following 542-residue polypeptide: Organic anion transporter 3 (542 aa).

The Cytoplasmic segment spans residues Met1–Arg9. Phosphoserine is present on Ser4. A helical membrane pass occupies residues Val10–Gly30. The Extracellular portion of the chain corresponds to Met31 to Glu123. Asn86 carries N-linked (GlcNAc...) asparagine glycosylation. Residues Met124–Ser144 traverse the membrane as a helical segment. Residues Asp145–Lys150 lie on the Cytoplasmic side of the membrane. Residues Pro151 to Pro171 traverse the membrane as a helical segment. Residues Thr172 to Tyr176 are Extracellular-facing. Residues Met177–Leu197 traverse the membrane as a helical segment. Over Asn198 to Thr212 the chain is Cytoplasmic. The chain crosses the membrane as a helical span at residues Ala213–Pro233. The Extracellular portion of the chain corresponds to Gln234–Arg236. Residues Trp237–Pro257 traverse the membrane as a helical segment. Over Glu258–Thr327 the chain is Cytoplasmic. Residues Leu328–Val348 traverse the membrane as a helical segment. Residues Glu349 to Asn354 lie on the Extracellular side of the membrane. A helical membrane pass occupies residues Ile355–Leu375. Topologically, residues Ser376 to Ala389 are cytoplasmic. The helical transmembrane segment at Leu390–Leu410 threads the bilayer. A topological domain (extracellular) is located at residue Arg411. A helical membrane pass occupies residues Thr412–Tyr432. Residues Thr433–Pro471 are Cytoplasmic-facing. The helical transmembrane segment at Phe472–Leu492 threads the bilayer. Topologically, residues Pro493–Ser542 are extracellular. Residues Lys518 to Ser527 show a composition bias toward basic and acidic residues. The disordered stretch occupies residues Lys518 to Ser542.

It belongs to the major facilitator (TC 2.A.1) superfamily. Organic cation transporter (TC 2.A.1.19) family.

Its subcellular location is the basolateral cell membrane. It catalyses the reaction estrone 3-sulfate(out) + glutarate(in) = estrone 3-sulfate(in) + glutarate(out). The catalysed reaction is estrone 3-sulfate(in) + 2-oxoglutarate(out) = estrone 3-sulfate(out) + 2-oxoglutarate(in). It carries out the reaction glutarate(in) + 2-oxoglutarate(out) = glutarate(out) + 2-oxoglutarate(in). The enzyme catalyses urate(in) + 2-oxoglutarate(out) = urate(out) + 2-oxoglutarate(in). It catalyses the reaction taurocholate(out) + glutarate(in) = taurocholate(in) + glutarate(out). The catalysed reaction is dehydroepiandrosterone 3-sulfate(out) + glutarate(in) = dehydroepiandrosterone 3-sulfate(in) + glutarate(out). It carries out the reaction prostaglandin F2alpha(out) + glutarate(in) = prostaglandin F2alpha(in) + glutarate(out). The enzyme catalyses prostaglandin F2alpha(out) + 2-oxoglutarate(in) = prostaglandin F2alpha(in) + 2-oxoglutarate(out). It catalyses the reaction (R)-carnitine(out) + 2-oxoglutarate(in) = (R)-carnitine(in) + 2-oxoglutarate(out). The catalysed reaction is glutarate(in) + (R)-carnitine(out) = glutarate(out) + (R)-carnitine(in). It carries out the reaction prostaglandin E2(out) + 2-oxoglutarate(in) = prostaglandin E2(in) + 2-oxoglutarate(out). The enzyme catalyses prostaglandin E2(out) + glutarate(in) = prostaglandin E2(in) + glutarate(out). It catalyses the reaction urate(in) + glutarate(out) = urate(out) + glutarate(in). The catalysed reaction is taurocholate(out) + 2-oxoglutarate(in) = taurocholate(in) + 2-oxoglutarate(out). It carries out the reaction dehydroepiandrosterone 3-sulfate(out) + 2-oxoglutarate(in) = dehydroepiandrosterone 3-sulfate(in) + 2-oxoglutarate(out). The enzyme catalyses kynurenate(out) + a dicarboxylate(in) = kynurenate(in) + a dicarboxylate(out). It catalyses the reaction (indol-3-yl)acetate(out) + a dicarboxylate(in) = (indol-3-yl)acetate(in) + a dicarboxylate(out). The catalysed reaction is indoxyl sulfate(out) + a dicarboxylate(in) = indoxyl sulfate(in) + a dicarboxylate(out). It carries out the reaction N-benzoylglycine(out) + a dicarboxylate(in) = N-benzoylglycine(in) + a dicarboxylate(out). The enzyme catalyses 3-carboxy-4-methyl-5-propyl-2-furanpropanoate(out) + a dicarboxylate(in) = 3-carboxy-4-methyl-5-propyl-2-furanpropanoate(in) + a dicarboxylate(out). It catalyses the reaction (6R)-L-erythro-5,6,7,8-tetrahydrobiopterin(out) + a dicarboxylate(in) = (6R)-L-erythro-5,6,7,8-tetrahydrobiopterin(in) + a dicarboxylate(out). The catalysed reaction is L-erythro-7,8-dihydrobiopterin(out) + a dicarboxylate(in) = L-erythro-7,8-dihydrobiopterin(in) + a dicarboxylate(out). It carries out the reaction L-sepiapterin(out) + a dicarboxylate(in) = L-sepiapterin(in) + a dicarboxylate(out). Functions as an organic anion/dicarboxylate exchanger that couples organic anion uptake indirectly to the sodium gradient. Transports organic anions such as estrone 3-sulfate (E1S) and urate in exchange for dicarboxylates such as glutarate or ketoglutarate (2-oxoglutarate). Plays an important role in the excretion of endogenous and exogenous organic anions, especially from the kidney and the brain. E1S transport is pH- and chloride-dependent and may also involve E1S/cGMP exchange. Responsible for the transport of prostaglandin E2 (PGE2) and prostaglandin F2(alpha) (PGF2(alpha)) in the basolateral side of the renal tubule. Involved in the transport of neuroactive tryptophan metabolites kynurenate and xanthurenate. Functions as a biopterin transporters involved in the uptake and the secretion of coenzymes tetrahydrobiopterin (BH4), dihydrobiopterin (BH2) and sepiapterin to urine, thereby determining baseline levels of blood biopterins. May be involved in the basolateral transport of steviol, a metabolite of the popular sugar substitute stevioside. May participate in the detoxification/ renal excretion of drugs and xenobiotics, such as the histamine H(2)-receptor antagonists fexofenadine and cimetidine, the antibiotic benzylpenicillin (PCG), the anionic herbicide 2,4-dichloro-phenoxyacetate (2,4-D), the diagnostic agent p-aminohippurate (PAH), the antiviral acyclovir (ACV), and the mycotoxin ochratoxin (OTA), by transporting these exogenous organic anions across the cell membrane in exchange for dicarboxylates such as 2-oxoglutarate. Contributes to the renal uptake of potent uremic toxins (indoxyl sulfate (IS), indole acetate (IA), hippurate/N-benzoylglycine (HA) and 3-carboxy-4-methyl-5-propyl-2-furanpropionate (CMPF)), pravastatin, PCG, E1S and dehydroepiandrosterone sulfate (DHEAS), and is partly involved in the renal uptake of temocaprilat (an angiotensin-converting enzyme (ACE) inhibitor). May contribute to the release of cortisol in the adrenals. Involved in one of the detoxification systems on the choroid plexus (CP), removes substrates such as E1S or taurocholate (TC), PCG, 2,4-D and PAH, from the cerebrospinal fluid (CSF) to the blood for eventual excretion in urine and bile. Also contributes to the uptake of several other organic compounds such as the prostanoids prostaglandin E(2) and prostaglandin F(2-alpha), L-carnitine, and the therapeutic drugs allopurinol, 6-mercaptopurine (6-MP) and 5-fluorouracil (5-FU). Mediates the transport of PAH, PCG, and the statins pravastatin and pitavastatin, from the cerebrum into the blood circulation across the blood-brain barrier (BBB). In summary, plays a role in the efflux of drugs and xenobiotics, helping reduce their undesired toxicological effects on the body. In Oryctolagus cuniculus (Rabbit), this protein is Organic anion transporter 3 (SLC22A8).